Consider the following 271-residue polypeptide: Type III pantothenate kinase (271 aa).

Residue 6 to 13 (DVRNTNIV) participates in ATP binding. 109–112 (GADR) is a substrate binding site. Aspartate 111 functions as the Proton acceptor in the catalytic mechanism. Aspartate 131 contacts K(+). Threonine 134 is a binding site for ATP. Threonine 186 is a binding site for substrate.

It belongs to the type III pantothenate kinase family. As to quaternary structure, homodimer. Requires NH4(+) as cofactor. The cofactor is K(+).

Its subcellular location is the cytoplasm. It catalyses the reaction (R)-pantothenate + ATP = (R)-4'-phosphopantothenate + ADP + H(+). It functions in the pathway cofactor biosynthesis; coenzyme A biosynthesis; CoA from (R)-pantothenate: step 1/5. In terms of biological role, catalyzes the phosphorylation of pantothenate (Pan), the first step in CoA biosynthesis. In Rhodococcus erythropolis (strain PR4 / NBRC 100887), this protein is Type III pantothenate kinase.